The following is a 303-amino-acid chain: Glutathione transport system permease protein GsiD (303 aa).

6 helical membrane passes run 40–60, 105–125, 144–164, 165–185, 222–242, and 266–286; these read AMTA…ARWI, LAAG…LGLL, LFAF…GSGI, ANVI…LVRG, IVVF…SLSF, and VIAP…VLAF. In terms of domain architecture, ABC transmembrane type-1 spans 101–290; sequence AQISLAAGVF…LTVLAFNLLG (190 aa).

It belongs to the binding-protein-dependent transport system permease family. In terms of assembly, the complex is composed of two ATP-binding proteins (GsiA), two transmembrane proteins (GsiC and GsiD) and a solute-binding protein (GsiB).

The protein localises to the cell inner membrane. Functionally, part of the ABC transporter complex GsiABCD involved in glutathione import. Probably responsible for the translocation of the substrate across the membrane. The protein is Glutathione transport system permease protein GsiD of Escherichia coli O157:H7.